Here is a 138-residue protein sequence, read N- to C-terminus: Large-conductance mechanosensitive channel (138 aa).

3 helical membrane-spanning segments follow: residues 15–35, 38–58, and 80–100; these read VDLA…NSVV, IFMP…MFIQ, and GNFI…FFLV.

Belongs to the MscL family. As to quaternary structure, homopentamer.

It is found in the cell inner membrane. Its function is as follows. Channel that opens in response to stretch forces in the membrane lipid bilayer. May participate in the regulation of osmotic pressure changes within the cell. This chain is Large-conductance mechanosensitive channel, found in Bartonella bacilliformis (strain ATCC 35685 / KC583 / Herrer 020/F12,63).